Reading from the N-terminus, the 165-residue chain is Ubiquitin-fold modifier-conjugating enzyme 1 (165 aa).

Catalysis depends on Cys-117, which acts as the Glycyl thioester intermediate.

The protein belongs to the ubiquitin-conjugating enzyme family. UFC1 subfamily.

E2-like enzyme which forms an intermediate with UFM1 via a thioester linkage. The protein is Ubiquitin-fold modifier-conjugating enzyme 1 of Brugia malayi (Filarial nematode worm).